A 466-amino-acid polypeptide reads, in one-letter code: Adenosylhomocysteinase (466 aa).

Substrate contacts are provided by Thr-57, Asp-132, and Glu-192. 193-195 (TTT) lines the NAD(+) pocket. Substrate is bound by residues Lys-222 and Asp-226. NAD(+) contacts are provided by residues Asn-227, 256-261 (GYGDVG), Glu-279, Asn-314, 335-337 (IGH), and Asn-380.

It belongs to the adenosylhomocysteinase family. NAD(+) serves as cofactor.

Its subcellular location is the cytoplasm. The enzyme catalyses S-adenosyl-L-homocysteine + H2O = L-homocysteine + adenosine. Its pathway is amino-acid biosynthesis; L-homocysteine biosynthesis; L-homocysteine from S-adenosyl-L-homocysteine: step 1/1. Functionally, may play a key role in the regulation of the intracellular concentration of adenosylhomocysteine. This is Adenosylhomocysteinase from Rhizobium etli (strain ATCC 51251 / DSM 11541 / JCM 21823 / NBRC 15573 / CFN 42).